A 72-amino-acid chain; its full sequence is Translation initiation factor IF-1 (72 aa).

Positions 1 to 72 constitute an S1-like domain; it reads MTKEEVLEFP…TKGRITYRFK (72 aa).

This sequence belongs to the IF-1 family. As to quaternary structure, component of the 30S ribosomal translation pre-initiation complex which assembles on the 30S ribosome in the order IF-2 and IF-3, IF-1 and N-formylmethionyl-tRNA(fMet); mRNA recruitment can occur at any time during PIC assembly.

The protein resides in the cytoplasm. Its function is as follows. One of the essential components for the initiation of protein synthesis. Stabilizes the binding of IF-2 and IF-3 on the 30S subunit to which N-formylmethionyl-tRNA(fMet) subsequently binds. Helps modulate mRNA selection, yielding the 30S pre-initiation complex (PIC). Upon addition of the 50S ribosomal subunit IF-1, IF-2 and IF-3 are released leaving the mature 70S translation initiation complex. The polypeptide is Translation initiation factor IF-1 (Agrobacterium fabrum (strain C58 / ATCC 33970) (Agrobacterium tumefaciens (strain C58))).